We begin with the raw amino-acid sequence, 323 residues long: tRNA U34 carboxymethyltransferase (323 aa).

Residues K91, W105, K110, G130, 152–154, 181–182, M196, Y200, and R315 each bind carboxy-S-adenosyl-L-methionine; these read DPS and IE.

The protein belongs to the class I-like SAM-binding methyltransferase superfamily. CmoB family. In terms of assembly, homotetramer.

It carries out the reaction carboxy-S-adenosyl-L-methionine + 5-hydroxyuridine(34) in tRNA = 5-carboxymethoxyuridine(34) in tRNA + S-adenosyl-L-homocysteine + H(+). Catalyzes carboxymethyl transfer from carboxy-S-adenosyl-L-methionine (Cx-SAM) to 5-hydroxyuridine (ho5U) to form 5-carboxymethoxyuridine (cmo5U) at position 34 in tRNAs. In Vibrio parahaemolyticus serotype O3:K6 (strain RIMD 2210633), this protein is tRNA U34 carboxymethyltransferase.